A 298-amino-acid polypeptide reads, in one-letter code: Glycine--tRNA ligase alpha subunit (298 aa).

Belongs to the class-II aminoacyl-tRNA synthetase family. Tetramer of two alpha and two beta subunits.

It localises to the cytoplasm. The enzyme catalyses tRNA(Gly) + glycine + ATP = glycyl-tRNA(Gly) + AMP + diphosphate. This Helicobacter pylori (strain P12) protein is Glycine--tRNA ligase alpha subunit.